A 367-amino-acid polypeptide reads, in one-letter code: Cell-death-related nuclease 7 (367 aa).

An N-terminal signal peptide occupies residues 1-18 (MRLYFVLIFSVIFTTGNG). Asn253 is a glycosylation site (N-linked (GlcNAc...) asparagine).

Belongs to the DNase II family.

The protein is Cell-death-related nuclease 7 (crn-7) of Caenorhabditis elegans.